A 790-amino-acid chain; its full sequence is Accumulates dyads protein 3 (790 aa).

Positions 8–122 are disordered; sequence LNKPESLKEQ…NTLKSPNKFL (115 aa). Residues 39–49 are compositionally biased toward basic and acidic residues; sequence PESKPFRERRS. Composition is skewed to polar residues over residues 50-78 and 89-108; these read QTWI…ISKL and ESWA…TLEN. Coiled-coil stretches lie at residues 241-328, 361-430, 477-498, and 540-658; these read ISKE…REEK, LVSE…RLND, KNLE…LEKN, and QQFR…LKKL.

Interacts directly with SSP1. Probable component of a SPB complex composed of ADY3, SSP1, DON1, MPC54, SPO21/MPC70, NUD1 and CNM67. Phosphorylated.

The protein resides in the prospore membrane. It is found in the cytoplasm. The protein localises to the cytoskeleton. Its subcellular location is the microtubule organizing center. It localises to the spindle pole body. Functionally, involved in the pathway that organizes the prospore membrane (PSM) during sporulation. Mediates the assembly of the DON1 ring structure at the leading edge of PSM during meiosis II. May constitute a physical link between SSP1-containing PSM precursors and the spindle pole body (SPB) and may facilitate the recruitment of other factors that are required to promote spore wall formation. This is Accumulates dyads protein 3 (ADY3) from Saccharomyces cerevisiae (strain ATCC 204508 / S288c) (Baker's yeast).